We begin with the raw amino-acid sequence, 124 residues long: Large ribosomal subunit protein bL21 (124 aa).

It belongs to the bacterial ribosomal protein bL21 family. Part of the 50S ribosomal subunit. Contacts protein L20.

In terms of biological role, this protein binds to 23S rRNA in the presence of protein L20. In Synechococcus sp. (strain WH7803), this protein is Large ribosomal subunit protein bL21.